The chain runs to 78 residues: Conotoxin Bu2 (78 aa).

The N-terminal stretch at 1 to 19 (MKLTCVLIIAVLFLTAITA) is a signal peptide. Residues 20 to 41 (DDSRDKQVYRAVGLIDKMRRIR) constitute a propeptide that is removed on maturation. Disulfide bonds link Cys-46/Cys-59, Cys-53/Cys-64, and Cys-58/Cys-73.

It belongs to the conotoxin O1 superfamily. In terms of tissue distribution, expressed by the venom duct.

The protein resides in the secreted. The sequence is that of Conotoxin Bu2 from Conus bullatus (Bubble cone).